The following is a 350-amino-acid chain: Putative zinc metalloprotease jhp_0242 (350 aa).

His-16 lines the Zn(2+) pocket. The active site involves Glu-17. His-20 is a binding site for Zn(2+). 5 helical membrane-spanning segments follow: residues 43 to 63 (WFFK…GGYV), 94 to 114 (LWIL…VYFF), 249 to 269 (LIMG…VGAL), 277 to 297 (MLLL…LLPI), and 326 to 346 (LWLV…FNDI). The PDZ domain occupies 108-177 (AVLVYFFLAL…GELILEIERN (70 aa)).

The protein belongs to the peptidase M50B family. It depends on Zn(2+) as a cofactor.

The protein localises to the cell inner membrane. In Helicobacter pylori (strain J99 / ATCC 700824) (Campylobacter pylori J99), this protein is Putative zinc metalloprotease jhp_0242.